A 511-amino-acid chain; its full sequence is Probable lipid II flippase MurJ (511 aa).

13 consecutive transmembrane segments (helical) span residues 31–51, 90–110, 130–150, 159–179, 182–202, 237–257, 271–291, 314–334, 354–374, 383–403, 407–427, 443–463, and 481–501; these read IFGAGMATDAFFVAFKLPNLL, LLTLALAVVTVAGMLAAPWVI, LLKITFPYILLISLASLVGAI, IPAFAPTLLNISMIGFALFAA, FNPPVLALAWAVTVGGVLQLV, ILGVSVSQISLIINTIFASFL, LMEFPSGVLGVALGTILLPSL, CFLLALPSAVALGILSGPLTV, LIAYSVGLIGLIVVKVLAPGF, PVKIAIVTLILTQLMNLAFIG, HAGLSLSIGLAACLNASLLYW, AFLLRLVVAVLVMSGVLLGML, and LMAVVLAGIAAYFAALAVLGF.

It belongs to the MurJ/MviN family.

Its subcellular location is the cell inner membrane. It participates in cell wall biogenesis; peptidoglycan biosynthesis. Functionally, involved in peptidoglycan biosynthesis. Transports lipid-linked peptidoglycan precursors from the inner to the outer leaflet of the cytoplasmic membrane. This Escherichia coli O157:H7 protein is Probable lipid II flippase MurJ.